Reading from the N-terminus, the 188-residue chain is GTP cyclohydrolase 1 (188 aa).

Positions 78, 81, and 150 each coordinate Zn(2+).

The protein belongs to the GTP cyclohydrolase I family. In terms of assembly, toroid-shaped homodecamer, composed of two pentamers of five dimers.

The catalysed reaction is GTP + H2O = 7,8-dihydroneopterin 3'-triphosphate + formate + H(+). It participates in cofactor biosynthesis; 7,8-dihydroneopterin triphosphate biosynthesis; 7,8-dihydroneopterin triphosphate from GTP: step 1/1. In Halalkalibacterium halodurans (strain ATCC BAA-125 / DSM 18197 / FERM 7344 / JCM 9153 / C-125) (Bacillus halodurans), this protein is GTP cyclohydrolase 1.